Consider the following 422-residue polypeptide: E3 ubiquitin-protein ligase CBLL2 (422 aa).

Residues 54 to 94 (CDKCDLPIKIYGRIIPCKHAFCYNCANLYDKIGYKICPRCS) form an RING-type zinc finger. The tract at residues 93 to 151 (CSYPVLRIEEHKRGSVFMCSVVQGCKRTYLSQKSLQAHIKRRHKRARKQVASASLEKLR) is HYB domain. The C2H2-type zinc-finger motif lies at 109 to 135 (FMCSVVQGCKRTYLSQKSLQAHIKRRH). 2 disordered regions span residues 190–213 (MQQM…PELS) and 378–422 (QTDA…HRPY). Residues 195 to 205 (HEQHNQPHKDL) show a composition bias toward basic and acidic residues. Residues 393 to 405 (LPPPPPTWSPPPS) show a composition bias toward pro residues. Positions 410–422 (GSHHSYQRRHRPY) are enriched in basic residues.

In terms of assembly, homodimer.

The protein resides in the cytoplasm. The catalysed reaction is S-ubiquitinyl-[E2 ubiquitin-conjugating enzyme]-L-cysteine + [acceptor protein]-L-lysine = [E2 ubiquitin-conjugating enzyme]-L-cysteine + N(6)-ubiquitinyl-[acceptor protein]-L-lysine.. It participates in protein modification; protein ubiquitination. In terms of biological role, E3 ubiquitin ligase catalyzing the covalent attachment of ubiquitin moieties onto substrate proteins. May operate on tyrosine-phosphorylated SRC substrates. This chain is E3 ubiquitin-protein ligase CBLL2 (CBLL2), found in Macaca fascicularis (Crab-eating macaque).